A 337-amino-acid polypeptide reads, in one-letter code: Monoacylglycerol lipase ABHD6 (337 aa).

Residues 1 to 8 (MDLDVVNM) lie on the Extracellular side of the membrane. The chain crosses the membrane as a helical; Signal-anchor for type II membrane protein span at residues 9 to 29 (FVIAGGTLAIPILAFVASFLL). Over 30–337 (WPSALIRIYY…HNTDNNKKLD (308 aa)) the chain is Cytoplasmic. In terms of domain architecture, AB hydrolase-1 spans 72–313 (PSILMLHGFS…CGHSVVMERP (242 aa)). Residue Phe-80 coordinates (9Z)-octadecenoate. Ser-148 (nucleophile) is an active-site residue. Met-149 serves as a coordination point for (9Z)-octadecenoate. Catalysis depends on charge relay system residues Asp-278 and His-306. His-306 provides a ligand contact to (9Z)-octadecenoate.

The protein belongs to the AB hydrolase superfamily.

It localises to the late endosome membrane. Its subcellular location is the lysosome membrane. It is found in the mitochondrion membrane. The enzyme catalyses Hydrolyzes glycerol monoesters of long-chain fatty acids.. It carries out the reaction 1-octanoylglycerol + H2O = octanoate + glycerol + H(+). It catalyses the reaction 1-decanoylglycerol + H2O = decanoate + glycerol + H(+). The catalysed reaction is 1-dodecanoylglycerol + H2O = dodecanoate + glycerol + H(+). The enzyme catalyses 1-tetradecanoylglycerol + H2O = tetradecanoate + glycerol + H(+). It carries out the reaction 2-hexadecanoylglycerol + H2O = glycerol + hexadecanoate + H(+). It catalyses the reaction 2-(9Z-octadecenoyl)-glycerol + H2O = glycerol + (9Z)-octadecenoate + H(+). The catalysed reaction is 1-(9Z-octadecenoyl)-glycerol + H2O = glycerol + (9Z)-octadecenoate + H(+). The enzyme catalyses 2-(9Z,12Z-octadecadienoyl)-glycerol + H2O = (9Z,12Z)-octadecadienoate + glycerol + H(+). It carries out the reaction 2-(5Z,8Z,11Z,14Z-eicosatetraenoyl)-glycerol + H2O = glycerol + (5Z,8Z,11Z,14Z)-eicosatetraenoate + H(+). It catalyses the reaction 1-(5Z,8Z,11Z,14Z-eicosatetraenoyl)-glycerol + H2O = glycerol + (5Z,8Z,11Z,14Z)-eicosatetraenoate + H(+). The catalysed reaction is 1-(9Z,12Z-octadecadienoyl)-glycerol + H2O = (9Z,12Z)-octadecadienoate + glycerol + H(+). The enzyme catalyses 3-(9Z-octadecenoyl)-sn-glycero-1-phospho-(3'-(9Z-octadecenoyl)-1'-sn-glycerol) + H2O = 3-(9Z-octadecenoyl)-sn-glycero-1-phospho-(1'-sn-glycerol) + (9Z)-octadecenoate + H(+). It carries out the reaction (S,S)-2-(9Z-octadecenoyl)-sn-glycero-1-phospho-(2'-(9Z-octadecenoyl)-1'-sn-glycerol) + H2O = (S,S)-2-(9Z-octadecenoyl)-sn-glycero-1-phospho-(1'-sn-glycerol) + (9Z)-octadecenoate + H(+). It catalyses the reaction (R,R)-2-(9Z-octadecenoyl)-sn-glycero-3-phospho-(2'-(9Z-octadecenoyl)-3'-sn-glycerol) + H2O = (R,R)-2-(9Z-octadecenoyl)-sn-glycero-3-phospho-(3'-sn-glycerol) + (9Z)-octadecenoate + H(+). In terms of biological role, lipase that preferentially hydrolysis medium-chain saturated monoacylglycerols including 2-arachidonoylglycerol. Through 2-arachidonoylglycerol degradation may regulate endocannabinoid signaling pathways. Also has a lysophosphatidyl lipase activity with a preference for lysophosphatidylglycerol among other lysophospholipids. Also able to degrade bis(monoacylglycero)phosphate (BMP) and constitutes the major enzyme for BMP catabolism. BMP, also known as lysobisphosphatidic acid, is enriched in late endosomes and lysosomes and plays a key role in the formation of intraluminal vesicles and in lipid sorting. The protein is Monoacylglycerol lipase ABHD6 of Homo sapiens (Human).